We begin with the raw amino-acid sequence, 564 residues long: Proline--tRNA ligase (564 aa).

It belongs to the class-II aminoacyl-tRNA synthetase family. ProS type 1 subfamily. In terms of assembly, homodimer.

It is found in the cytoplasm. It carries out the reaction tRNA(Pro) + L-proline + ATP = L-prolyl-tRNA(Pro) + AMP + diphosphate. Functionally, catalyzes the attachment of proline to tRNA(Pro) in a two-step reaction: proline is first activated by ATP to form Pro-AMP and then transferred to the acceptor end of tRNA(Pro). As ProRS can inadvertently accommodate and process non-cognate amino acids such as alanine and cysteine, to avoid such errors it has two additional distinct editing activities against alanine. One activity is designated as 'pretransfer' editing and involves the tRNA(Pro)-independent hydrolysis of activated Ala-AMP. The other activity is designated 'posttransfer' editing and involves deacylation of mischarged Ala-tRNA(Pro). The misacylated Cys-tRNA(Pro) is not edited by ProRS. The protein is Proline--tRNA ligase of Bacillus velezensis (strain DSM 23117 / BGSC 10A6 / LMG 26770 / FZB42) (Bacillus amyloliquefaciens subsp. plantarum).